The following is a 354-amino-acid chain: NADH-quinone oxidoreductase subunit H (354 aa).

Helical transmembrane passes span 25–45 (LVRI…LILW), 91–111 (WLYL…WAVI), 126–146 (LLYA…AGWA), 170–190 (MGFA…SEIV), 205–225 (FLSW…ISGI), 253–273 (MAFA…SALA), 290–310 (FIPG…VFIW), and 330–350 (VFLP…MSPL).

The protein belongs to the complex I subunit 1 family. In terms of assembly, NDH-1 is composed of 14 different subunits. Subunits NuoA, H, J, K, L, M, N constitute the membrane sector of the complex.

The protein resides in the cell inner membrane. It catalyses the reaction a quinone + NADH + 5 H(+)(in) = a quinol + NAD(+) + 4 H(+)(out). Its function is as follows. NDH-1 shuttles electrons from NADH, via FMN and iron-sulfur (Fe-S) centers, to quinones in the respiratory chain. The immediate electron acceptor for the enzyme in this species is believed to be ubiquinone. Couples the redox reaction to proton translocation (for every two electrons transferred, four hydrogen ions are translocated across the cytoplasmic membrane), and thus conserves the redox energy in a proton gradient. This subunit may bind ubiquinone. The protein is NADH-quinone oxidoreductase subunit H of Burkholderia mallei (strain ATCC 23344).